A 199-amino-acid polypeptide reads, in one-letter code: NAD(P)H dehydrogenase (quinone) (199 aa).

Residues 4–190 (MLVLYYSAYG…DGARFQGRRV (187 aa)) form the Flavodoxin-like domain. FMN is bound by residues 10–15 (SAYGYM) and 78–80 (TRY). Tyr-12 is a binding site for NAD(+). Trp-98 serves as a coordination point for substrate. FMN is bound by residues 113 to 119 (STATQHG) and His-134. The disordered stretch occupies residues 157–181 (GGAPYGMTTTADGDGSRQPSAQELD). A compositionally biased stretch (polar residues) spans 163–177 (MTTTADGDGSRQPSA).

Belongs to the WrbA family. FMN is required as a cofactor.

It catalyses the reaction a quinone + NADH + H(+) = a quinol + NAD(+). The enzyme catalyses a quinone + NADPH + H(+) = a quinol + NADP(+). In Brucella melitensis biotype 2 (strain ATCC 23457), this protein is NAD(P)H dehydrogenase (quinone).